We begin with the raw amino-acid sequence, 398 residues long: Protein FAM53A (398 aa).

Residues 85–253 (QWQPQSPRPG…TSTPALGGRR (169 aa)) form a disordered region. The span at 103 to 115 (VDPSESTGSSTAP) shows a compositional bias: polar residues. Over residues 123–132 (SLSEPEELVR) the composition is skewed to basic and acidic residues. Ser125 carries the post-translational modification Phosphoserine. Low complexity-rich tracts occupy residues 176–193 (STGPTSPATPRPSSASGG) and 234–250 (TPLPWASSSPTSTPALG). Residues 268–276 (KRSRRKRRR) carry the Nuclear localization signal motif. Residues Ser301 and Ser304 each carry the phosphoserine modification. A disordered region spans residues 336-398 (PGCSQRGLRT…ELDLEQIENN (63 aa)). Residues 363 to 375 (GSRRSSGDPRDGD) are compositionally biased toward basic and acidic residues.

This sequence belongs to the FAM53 family.

It is found in the nucleus. Functionally, may play an important role in neural development; the dorsomedial roof of the third ventricle. The sequence is that of Protein FAM53A from Homo sapiens (Human).